Reading from the N-terminus, the 446-residue chain is Ribosomal protein uS12 methylthiotransferase RimO (446 aa).

One can recognise an MTTase N-terminal domain in the interval 10 to 122; sequence KTLHMVSLGC…IDELVNEKRS (113 aa). [4Fe-4S] cluster is bound by residues cysteine 19, cysteine 53, cysteine 85, cysteine 154, cysteine 158, and cysteine 161. One can recognise a Radical SAM core domain in the interval 140 to 369; it reads TGSSYHAYVK…GEIISQTTQE (230 aa). Positions 372–446 constitute a TRAM domain; it reads ESEVGKTFEV…GDKLLATVIK (75 aa).

Belongs to the methylthiotransferase family. RimO subfamily. The cofactor is [4Fe-4S] cluster.

It localises to the cytoplasm. The enzyme catalyses L-aspartate(89)-[ribosomal protein uS12]-hydrogen + (sulfur carrier)-SH + AH2 + 2 S-adenosyl-L-methionine = 3-methylsulfanyl-L-aspartate(89)-[ribosomal protein uS12]-hydrogen + (sulfur carrier)-H + 5'-deoxyadenosine + L-methionine + A + S-adenosyl-L-homocysteine + 2 H(+). Functionally, catalyzes the methylthiolation of an aspartic acid residue of ribosomal protein uS12. This chain is Ribosomal protein uS12 methylthiotransferase RimO, found in Aliarcobacter butzleri (strain RM4018) (Arcobacter butzleri).